Here is a 492-residue protein sequence, read N- to C-terminus: MTLWINGDWVTGQGALRVKCNPVSGELLWQGNDADAAQVGQACRAARAAFPRWARLSFGDRQVRVERFAGLLESNKVELTAIIARETGKPRWEAATEVTAMINKIAISIKAYHVRTGEQRSEMPDGAASLRHRPHGVLAVFGPYNFPGHLPNGHIVPALLAGNTVIFKPSELTPWSGEAVMRLWQQAGLPSGVLNLVQGGRETGQALSALEDLDGLLFTGSANTGYQLHRQLSGQPEKILALEMGGNNPLIIDDVADIDAAVHLTIQSAFVTAGQRCTCARRLLLKSGAQGDAFLARLVAVSQRLTPGNWDDEPQPFIGGLISEQAAHQVVTAWQELEAMGGRTQLAPRLLRAGTSLLTPGIVEMTGVAGVPDEEVFGPLLRVWRYDTFDEAIRMANNTRFGLSCGLVSSRRDKFEQLLLEARAGIVNWNKPLTGAASTAPFGGVGASGNHRPSAWYAADYCAWPMASLESDSLTLPTTLNPGLDFSEEVER.

220-225 (GSANTG) contacts NAD(+). Active-site residues include Glu-243 and Cys-277.

Belongs to the aldehyde dehydrogenase family. AstD subfamily.

The catalysed reaction is N-succinyl-L-glutamate 5-semialdehyde + NAD(+) + H2O = N-succinyl-L-glutamate + NADH + 2 H(+). It participates in amino-acid degradation; L-arginine degradation via AST pathway; L-glutamate and succinate from L-arginine: step 4/5. Functionally, catalyzes the NAD-dependent reduction of succinylglutamate semialdehyde into succinylglutamate. The chain is N-succinylglutamate 5-semialdehyde dehydrogenase from Escherichia fergusonii (strain ATCC 35469 / DSM 13698 / CCUG 18766 / IAM 14443 / JCM 21226 / LMG 7866 / NBRC 102419 / NCTC 12128 / CDC 0568-73).